We begin with the raw amino-acid sequence, 593 residues long: Proline--tRNA ligase (593 aa).

Belongs to the class-II aminoacyl-tRNA synthetase family. ProS type 1 subfamily. Homodimer.

Its subcellular location is the cytoplasm. The catalysed reaction is tRNA(Pro) + L-proline + ATP = L-prolyl-tRNA(Pro) + AMP + diphosphate. Catalyzes the attachment of proline to tRNA(Pro) in a two-step reaction: proline is first activated by ATP to form Pro-AMP and then transferred to the acceptor end of tRNA(Pro). As ProRS can inadvertently accommodate and process non-cognate amino acids such as alanine and cysteine, to avoid such errors it has two additional distinct editing activities against alanine. One activity is designated as 'pretransfer' editing and involves the tRNA(Pro)-independent hydrolysis of activated Ala-AMP. The other activity is designated 'posttransfer' editing and involves deacylation of mischarged Ala-tRNA(Pro). The misacylated Cys-tRNA(Pro) is not edited by ProRS. The sequence is that of Proline--tRNA ligase from Synechococcus sp. (strain CC9605).